The primary structure comprises 617 residues: Chaperone protein HscA homolog (617 aa).

The protein belongs to the heat shock protein 70 family.

Probable chaperone. Has a low intrinsic ATPase activity which is markedly stimulated by HscB. The protein is Chaperone protein HscA homolog of Vibrio parahaemolyticus serotype O3:K6 (strain RIMD 2210633).